A 359-amino-acid polypeptide reads, in one-letter code: Zinc finger CCCH domain-containing protein 20 (359 aa).

3 C3H1-type zinc fingers span residues 75 to 107 (TCDH…HPGE), 119 to 145 (YSGT…HGVF), and 153 to 177 (RYRT…HSPD). Disordered regions lie at residues 207 to 226 (SISP…SDSS) and 334 to 359 (MGRI…DLVM).

The polypeptide is Zinc finger CCCH domain-containing protein 20 (Arabidopsis thaliana (Mouse-ear cress)).